We begin with the raw amino-acid sequence, 713 residues long: Nucleoporin NUP82 (713 aa).

Residues 1 to 409 are interaction with NUP116; that stretch reads MSQSSRLSAL…SDLNPLAGLK (409 aa). Residues 463–713 form an interaction with NSP1 and NUP159 region; sequence TSISTEKSDT…VSQEFTTKTQ (251 aa). A coiled-coil region spans residues 582-713; that stretch reads EAQNKKWDAQ…VSQEFTTKTQ (132 aa). Residues 607 to 623 carry the Bipartite nuclear localization signal motif; it reads KKLSQIAESNKFKEKKI.

As to quaternary structure, component of the nuclear pore complex (NPC). NPC constitutes the exclusive means of nucleocytoplasmic transport. NPCs allow the passive diffusion of ions and small molecules and the active, nuclear transport receptor-mediated bidirectional transport of macromolecules such as proteins, RNAs, ribonucleoparticles (RNPs), and ribosomal subunits across the nuclear envelope. Due to its 8-fold rotational symmetry, all subunits are present with 8 copies or multiples thereof. NUP82 is part of the NUP82 subcomplex. This subcomplex is the base for interactions with NUP116 and GLE2, with NUP42 and GLE1 and with DYN2.

The protein localises to the nucleus. It localises to the nuclear pore complex. The protein resides in the nucleus membrane. In terms of biological role, functions as a component of the nuclear pore complex (NPC). NPC components, collectively referred to as nucleoporins (NUPs), can play the role of both NPC structural components and of docking or interaction partners for transiently associated nuclear transport factors. It is specifically involved as part of the NUP82-NUP159-NSP1 subcomplex in nuclear mRNA and pre-ribosome export by acting as a linker tethering nucleoporins that are directly involved in nuclear transport to the NPC via its coiled-coil domain. In Saccharomyces cerevisiae (strain ATCC 204508 / S288c) (Baker's yeast), this protein is Nucleoporin NUP82 (NUP82).